The primary structure comprises 65 residues: MSTKLKGPDGRIPDRLPDGSPAVSWERRWTEGSLPLWLVATVGGMAVLSVLGLFFFGSFTGVGSA.

Positions 1 to 17 (MSTKLKGPDGRIPDRLP) are enriched in basic and acidic residues. Residues 1–21 (MSTKLKGPDGRIPDRLPDGSP) form a disordered region. The chain crosses the membrane as a helical span at residues 36-56 (LWLVATVGGMAVLSVLGLFFF).

Belongs to the PsbJ family. As to quaternary structure, PSII is composed of 1 copy each of membrane proteins PsbA, PsbB, PsbC, PsbD, PsbE, PsbF, PsbH, PsbI, PsbJ, PsbK, PsbL, PsbM, PsbT, PsbX, PsbY, Psb30/Ycf12, peripheral proteins PsbO, CyanoQ (PsbQ), PsbU, PsbV and a large number of cofactors. It forms dimeric complexes.

It localises to the cellular thylakoid membrane. Its function is as follows. One of the components of the core complex of photosystem II (PSII). PSII is a light-driven water:plastoquinone oxidoreductase that uses light energy to abstract electrons from H(2)O, generating O(2) and a proton gradient subsequently used for ATP formation. It consists of a core antenna complex that captures photons, and an electron transfer chain that converts photonic excitation into a charge separation. The sequence is that of Photosystem II reaction center protein J from Prochlorococcus marinus (strain MIT 9313).